The following is a 140-amino-acid chain: Large ribosomal subunit protein uL11 (140 aa).

Belongs to the universal ribosomal protein uL11 family. In terms of assembly, part of the ribosomal stalk of the 50S ribosomal subunit. Interacts with L10 and the large rRNA to form the base of the stalk. L10 forms an elongated spine to which L12 dimers bind in a sequential fashion forming a multimeric L10(L12)X complex. In terms of processing, one or more lysine residues are methylated.

In terms of biological role, forms part of the ribosomal stalk which helps the ribosome interact with GTP-bound translation factors. The sequence is that of Large ribosomal subunit protein uL11 from Enterococcus faecalis (strain ATCC 700802 / V583).